Here is a 574-residue protein sequence, read N- to C-terminus: UvrABC system protein C (574 aa).

Residues Lys-12 to Ile-92 form the GIY-YIG domain. A UVR domain is found at Glu-200 to Leu-235.

It belongs to the UvrC family. As to quaternary structure, interacts with UvrB in an incision complex.

It is found in the cytoplasm. Its function is as follows. The UvrABC repair system catalyzes the recognition and processing of DNA lesions. UvrC both incises the 5' and 3' sides of the lesion. The N-terminal half is responsible for the 3' incision and the C-terminal half is responsible for the 5' incision. The protein is UvrABC system protein C of Petrotoga mobilis (strain DSM 10674 / SJ95).